A 467-amino-acid chain; its full sequence is UDP-N-acetylmuramate--L-alanine ligase (467 aa).

114–120 lines the ATP pocket; it reads GTHGKTT.

This sequence belongs to the MurCDEF family.

It localises to the cytoplasm. The enzyme catalyses UDP-N-acetyl-alpha-D-muramate + L-alanine + ATP = UDP-N-acetyl-alpha-D-muramoyl-L-alanine + ADP + phosphate + H(+). The protein operates within cell wall biogenesis; peptidoglycan biosynthesis. Cell wall formation. The polypeptide is UDP-N-acetylmuramate--L-alanine ligase (Bradyrhizobium diazoefficiens (strain JCM 10833 / BCRC 13528 / IAM 13628 / NBRC 14792 / USDA 110)).